Consider the following 364-residue polypeptide: UDP-N-acetylglucosamine--N-acetylmuramyl-(pentapeptide) pyrophosphoryl-undecaprenol N-acetylglucosamine transferase (364 aa).

UDP-N-acetyl-alpha-D-glucosamine is bound by residues 12 to 14 (TGG), N124, R167, S195, I249, 268 to 273 (ALTVSE), and Q294.

This sequence belongs to the glycosyltransferase 28 family. MurG subfamily.

It localises to the cell inner membrane. The enzyme catalyses di-trans,octa-cis-undecaprenyl diphospho-N-acetyl-alpha-D-muramoyl-L-alanyl-D-glutamyl-meso-2,6-diaminopimeloyl-D-alanyl-D-alanine + UDP-N-acetyl-alpha-D-glucosamine = di-trans,octa-cis-undecaprenyl diphospho-[N-acetyl-alpha-D-glucosaminyl-(1-&gt;4)]-N-acetyl-alpha-D-muramoyl-L-alanyl-D-glutamyl-meso-2,6-diaminopimeloyl-D-alanyl-D-alanine + UDP + H(+). It functions in the pathway cell wall biogenesis; peptidoglycan biosynthesis. Functionally, cell wall formation. Catalyzes the transfer of a GlcNAc subunit on undecaprenyl-pyrophosphoryl-MurNAc-pentapeptide (lipid intermediate I) to form undecaprenyl-pyrophosphoryl-MurNAc-(pentapeptide)GlcNAc (lipid intermediate II). The chain is UDP-N-acetylglucosamine--N-acetylmuramyl-(pentapeptide) pyrophosphoryl-undecaprenol N-acetylglucosamine transferase from Alteromonas mediterranea (strain DSM 17117 / CIP 110805 / LMG 28347 / Deep ecotype).